Reading from the N-terminus, the 854-residue chain is Envelope glycoprotein B (854 aa).

An N-terminal signal peptide occupies residues 1 to 30; the sequence is MSKNWFPLLCASVLVVYVSIASSSTGTASG. Residues 31-723 lie on the Virion surface side of the membrane; the sequence is AVTPTSPTEN…EGVVGFIKNP (693 aa). 3 N-linked (GlcNAc...) asparagine; by host glycosylation sites follow: N40, N48, and N60. 5 disulfide bridges follow: C69-C524, C86-C480, C160-C225, C317-C364, and C546-C583. The segment at 127–133 is involved in fusion and/or binding to host membrane; it reads SYSFIRE. N183 carries N-linked (GlcNAc...) asparagine; by host glycosylation. The involved in fusion and/or binding to host membrane stretch occupies residues 212-219; that stretch reads GSTWLYTT. N256, N275, N314, N356, N378, N382, N390, N423, N426, N442, N558, and N595 each carry an N-linked (GlcNAc...) asparagine; by host glycan. Hydrophobic membrane proximal region regions lie at residues 669–721 and 700–720; these read VEGK…GFIK and VAIG…VGFI. Residues 724 to 744 form a helical membrane-spanning segment; the sequence is FGSFTVILFLLAVLGVIYLIY. Residues 745–854 lie on the Intravirion side of the membrane; that stretch reads MRQKRAYEKP…YQKIQNEYEV (110 aa).

Belongs to the herpesviridae glycoprotein B family. Homotrimer; disulfide-linked. Binds to heparan sulfate proteoglycans. Interacts with gH/gL heterodimer. Post-translationally, a proteolytic cleavage by host furin generates two subunits that remain linked by disulfide bonds.

It is found in the virion membrane. The protein resides in the host cell membrane. It localises to the host endosome membrane. The protein localises to the host Golgi apparatus membrane. In terms of biological role, envelope glycoprotein that forms spikes at the surface of virion envelope. Essential for the initial attachment to heparan sulfate moieties of the host cell surface proteoglycans. Involved in fusion of viral and cellular membranes leading to virus entry into the host cell. Following initial binding to its host receptors, membrane fusion is mediated by the fusion machinery composed at least of gB and the heterodimer gH/gL. May be involved in the fusion between the virion envelope and the outer nuclear membrane during virion egress. This chain is Envelope glycoprotein B, found in Macaca mulatta (Rhesus macaque).